A 578-amino-acid chain; its full sequence is Potassium-transporting ATPase potassium-binding subunit (578 aa).

11 helical membrane-spanning segments follow: residues 3 to 23 (AAAL…AVPL), 67 to 87 (AAAA…LERL), 95 to 115 (PAGL…SFAT), 136 to 156 (ALTV…AALV), 181 to 201 (LLLP…VPQT), 264 to 284 (LEAL…GALV), 291 to 311 (WTVY…TVSA), 396 to 416 (GLYG…LMVG), 436 to 456 (LAIL…CLLP), 504 to 524 (VAML…AGAF), and 543 to 563 (LFAG…FLPA).

Belongs to the KdpA family. The system is composed of three essential subunits: KdpA, KdpB and KdpC.

The protein localises to the cell inner membrane. Part of the high-affinity ATP-driven potassium transport (or Kdp) system, which catalyzes the hydrolysis of ATP coupled with the electrogenic transport of potassium into the cytoplasm. This subunit binds the periplasmic potassium ions and delivers the ions to the membrane domain of KdpB through an intramembrane tunnel. The sequence is that of Potassium-transporting ATPase potassium-binding subunit from Anaeromyxobacter dehalogenans (strain 2CP-C).